A 275-amino-acid chain; its full sequence is Polyamine aminopropyltransferase (275 aa).

Residues 2–235 (EFWFTEKQTE…GMWTFTIGSK (234 aa)) form the PABS domain. S-methyl-5'-thioadenosine is bound at residue Gln-31. Spermidine is bound by residues His-62 and Asp-86. S-methyl-5'-thioadenosine-binding positions include Asp-106 and 137–138 (DG). Asp-155 acts as the Proton acceptor in catalysis. 155-158 (DSTE) contributes to the spermidine binding site. Residue Pro-162 coordinates S-methyl-5'-thioadenosine.

This sequence belongs to the spermidine/spermine synthase family. As to quaternary structure, homodimer or homotetramer.

The protein localises to the cytoplasm. It carries out the reaction S-adenosyl 3-(methylsulfanyl)propylamine + putrescine = S-methyl-5'-thioadenosine + spermidine + H(+). The protein operates within amine and polyamine biosynthesis; spermidine biosynthesis; spermidine from putrescine: step 1/1. Catalyzes the irreversible transfer of a propylamine group from the amino donor S-adenosylmethioninamine (decarboxy-AdoMet) to putrescine (1,4-diaminobutane) to yield spermidine. This is Polyamine aminopropyltransferase from Shouchella clausii (strain KSM-K16) (Alkalihalobacillus clausii).